A 358-amino-acid chain; its full sequence is Ribosomal RNA large subunit methyltransferase M (358 aa).

S-adenosyl-L-methionine contacts are provided by residues Ser-191, 224–227 (APGG), Asp-243, Asp-263, and Asp-279. The active-site Proton acceptor is Lys-308.

The protein belongs to the class I-like SAM-binding methyltransferase superfamily. RNA methyltransferase RlmE family. RlmM subfamily. Monomer.

The protein localises to the cytoplasm. It carries out the reaction cytidine(2498) in 23S rRNA + S-adenosyl-L-methionine = 2'-O-methylcytidine(2498) in 23S rRNA + S-adenosyl-L-homocysteine + H(+). Catalyzes the 2'-O-methylation at nucleotide C2498 in 23S rRNA. The protein is Ribosomal RNA large subunit methyltransferase M of Marinobacter nauticus (strain ATCC 700491 / DSM 11845 / VT8) (Marinobacter aquaeolei).